Here is a 448-residue protein sequence, read N- to C-terminus: Asparagine--tRNA ligase (448 aa).

Belongs to the class-II aminoacyl-tRNA synthetase family. As to quaternary structure, homodimer.

Its subcellular location is the cytoplasm. It catalyses the reaction tRNA(Asn) + L-asparagine + ATP = L-asparaginyl-tRNA(Asn) + AMP + diphosphate + H(+). This chain is Asparagine--tRNA ligase, found in Streptococcus suis (strain 98HAH33).